Here is a 582-residue protein sequence, read N- to C-terminus: Aspartate--tRNA ligase (582 aa).

An L-aspartate-binding site is contributed by Glu174. Residues Gln198 to Lys201 are aspartate. Arg220 contributes to the L-aspartate binding site. ATP contacts are provided by residues Arg220–Glu222 and Gln229. Residue His443 participates in L-aspartate binding. Glu477 contacts ATP. Arg484 is a binding site for L-aspartate. Gly529–Arg532 serves as a coordination point for ATP.

This sequence belongs to the class-II aminoacyl-tRNA synthetase family. Type 1 subfamily. Homodimer.

The protein localises to the cytoplasm. The enzyme catalyses tRNA(Asp) + L-aspartate + ATP = L-aspartyl-tRNA(Asp) + AMP + diphosphate. In terms of biological role, catalyzes the attachment of L-aspartate to tRNA(Asp) in a two-step reaction: L-aspartate is first activated by ATP to form Asp-AMP and then transferred to the acceptor end of tRNA(Asp). The polypeptide is Aspartate--tRNA ligase (Streptococcus pyogenes serotype M6 (strain ATCC BAA-946 / MGAS10394)).